The primary structure comprises 100 residues: Large ribosomal subunit protein bL21 (100 aa).

This sequence belongs to the bacterial ribosomal protein bL21 family. In terms of assembly, part of the 50S ribosomal subunit. Contacts proteins L15 and L20.

Its function is as follows. Binds directly to 23S rRNA, probably serving to organize its structure. The chain is Large ribosomal subunit protein bL21 from Deinococcus radiodurans (strain ATCC 13939 / DSM 20539 / JCM 16871 / CCUG 27074 / LMG 4051 / NBRC 15346 / NCIMB 9279 / VKM B-1422 / R1).